A 155-amino-acid chain; its full sequence is Ribosome maturation factor RimP (155 aa).

This sequence belongs to the RimP family.

It localises to the cytoplasm. In terms of biological role, required for maturation of 30S ribosomal subunits. The chain is Ribosome maturation factor RimP from Listeria monocytogenes serovar 1/2a (strain ATCC BAA-679 / EGD-e).